The sequence spans 61 residues: Metallothionein-2B (61 aa).

Residue Met1 is modified to N-acetylmethionine. A beta region spans residues 1–29 (MDPNCSCATGDSCTCASSCKCKECKCTSC). Residues Cys5, Cys7, Cys13, Cys15, Cys19, Cys21, Cys24, Cys26, Cys29, Cys33, Cys34, Cys36, Cys37, Cys41, Cys44, Cys48, Cys50, Cys57, Cys59, and Cys60 each coordinate a divalent metal cation. The interval 30–61 (KKSCCSCCPAGCTKCAQGCICKGASDKCSCCA) is alpha.

This sequence belongs to the metallothionein superfamily. Type 1 family. Monomer.

Functionally, metallothioneins have a high content of cysteine residues that bind various heavy metals; these proteins are transcriptionally regulated by both heavy metals and glucocorticoids. This chain is Metallothionein-2B, found in Oryctolagus cuniculus (Rabbit).